Consider the following 403-residue polypeptide: Homoserine O-succinyltransferase (403 aa).

Positions 1 to 31 (MTELQVDPAASADPAAAADTPRHPAATLPPD) are disordered. Residues 7–26 (DPAASADPAAAADTPRHPAA) are compositionally biased toward low complexity. The 310-residue stretch at 74 to 383 (NAVLICHALN…HGHDAFLLED (310 aa)) folds into the AB hydrolase-1 domain. The active-site Nucleophile is the Ser178. Arg248 contributes to the substrate binding site. Residues Asp343 and His376 contribute to the active site. Asp377 contributes to the substrate binding site.

This sequence belongs to the AB hydrolase superfamily. MetX family. Homodimer.

It localises to the cytoplasm. It carries out the reaction L-homoserine + succinyl-CoA = O-succinyl-L-homoserine + CoA. It participates in amino-acid biosynthesis; L-methionine biosynthesis via de novo pathway; O-succinyl-L-homoserine from L-homoserine: step 1/1. Its function is as follows. Transfers a succinyl group from succinyl-CoA to L-homoserine, forming succinyl-L-homoserine. The chain is Homoserine O-succinyltransferase from Ralstonia nicotianae (strain ATCC BAA-1114 / GMI1000) (Ralstonia solanacearum).